A 574-amino-acid chain; its full sequence is VAO-type flavoprotein oxidase VAO615 (574 aa).

A signal peptide spans 1–17 (MPASLLRFLALAGTAVG). 4 cysteine pairs are disulfide-bonded: cysteine 28/cysteine 572, cysteine 64/cysteine 77, cysteine 108/cysteine 118, and cysteine 450/cysteine 476. An N-linked (GlcNAc...) asparagine glycan is attached at asparagine 47. Residue asparagine 105 is glycosylated (N-linked (GlcNAc...) asparagine). In terms of domain architecture, FAD-binding PCMH-type spans 120-299 (LGNYPSYVVN…LSMTARLHRD (180 aa)). Asparagine 129, asparagine 211, asparagine 310, asparagine 346, and asparagine 438 each carry an N-linked (GlcNAc...) asparagine glycan. The 6-(S-cysteinyl)-8alpha-(pros-histidyl)-FAD (His-Cys) cross-link spans 157–222 (HDYLGKSTGK…TGHRIVGGTC (66 aa)).

It belongs to the oxygen-dependent FAD-linked oxidoreductase family. FAD serves as cofactor. Post-translationally, the FAD cofactor is bound via a bicovalent 6-S-cysteinyl, 8alpha-N1-histidyl FAD linkage.

It is found in the secreted. Probably oxidoreductase that, when reduced, rapidly reacts with molecular oxygen, a hallmark of flavoprotein oxidases. A large panel of alcohols, including carbohydrates, steroids and secondary alcohols were tested as potential substrates, but none has been identified so far. This chain is VAO-type flavoprotein oxidase VAO615, found in Thermothelomyces thermophilus (strain ATCC 42464 / BCRC 31852 / DSM 1799) (Sporotrichum thermophile).